A 107-amino-acid polypeptide reads, in one-letter code: Quaternary ammonium compound-resistance protein QacC (107 aa).

Residues 1-2 (MP) are Cytoplasmic-facing. A helical transmembrane segment spans residues 3-20 (YIYLIIAISTEVIGSAFL). At 21–29 (KSSEGFSKF) the chain is on the extracellular side. Residues 30 to 47 (IPSLGTIISFGICFYFLS) traverse the membrane as a helical segment. Over 48 to 56 (KTMQHLPLN) the chain is Cytoplasmic. Residues 57 to 75 (ITYATWAGLGLVLTTVVSI) traverse the membrane as a helical segment. The Extracellular portion of the chain corresponds to 76 to 85 (IIFKEQINLI). A helical membrane pass occupies residues 86–103 (TIVSIVLIIVGVVSLNIF). Topologically, residues 104 to 107 (GTSH) are cytoplasmic.

This sequence belongs to the drug/metabolite transporter (DMT) superfamily. Small multidrug resistance (SMR) (TC 2.A.7.1) family.

It is found in the cell membrane. With respect to regulation, ethidium export is inhibited by N-ethylmaleimide (NEM). In terms of biological role, multidrug exporter. Is implicated for the resistance to bacteriocidal quaternary ammonium compounds and ethidium bromide. The polypeptide is Quaternary ammonium compound-resistance protein QacC (Staphylococcus aureus).